Consider the following 397-residue polypeptide: Arginine biosynthesis bifunctional protein ArgJ (397 aa).

6 residues coordinate substrate: T147, K173, T184, E270, N392, and T397. Catalysis depends on T184, which acts as the Nucleophile.

Belongs to the ArgJ family. In terms of assembly, heterotetramer of two alpha and two beta chains.

Its subcellular location is the cytoplasm. It carries out the reaction N(2)-acetyl-L-ornithine + L-glutamate = N-acetyl-L-glutamate + L-ornithine. The enzyme catalyses L-glutamate + acetyl-CoA = N-acetyl-L-glutamate + CoA + H(+). It participates in amino-acid biosynthesis; L-arginine biosynthesis; L-ornithine and N-acetyl-L-glutamate from L-glutamate and N(2)-acetyl-L-ornithine (cyclic): step 1/1. It functions in the pathway amino-acid biosynthesis; L-arginine biosynthesis; N(2)-acetyl-L-ornithine from L-glutamate: step 1/4. Functionally, catalyzes two activities which are involved in the cyclic version of arginine biosynthesis: the synthesis of N-acetylglutamate from glutamate and acetyl-CoA as the acetyl donor, and of ornithine by transacetylation between N(2)-acetylornithine and glutamate. This Streptococcus thermophilus (strain ATCC BAA-250 / LMG 18311) protein is Arginine biosynthesis bifunctional protein ArgJ.